Consider the following 430-residue polypeptide: Asparagine--tRNA ligase (430 aa).

It belongs to the class-II aminoacyl-tRNA synthetase family. As to quaternary structure, homodimer.

It is found in the cytoplasm. It catalyses the reaction tRNA(Asn) + L-asparagine + ATP = L-asparaginyl-tRNA(Asn) + AMP + diphosphate + H(+). This is Asparagine--tRNA ligase from Staphylococcus saprophyticus subsp. saprophyticus (strain ATCC 15305 / DSM 20229 / NCIMB 8711 / NCTC 7292 / S-41).